Here is a 382-residue protein sequence, read N- to C-terminus: ATP phosphoribosyltransferase regulatory subunit (382 aa).

It belongs to the class-II aminoacyl-tRNA synthetase family. HisZ subfamily. As to quaternary structure, heteromultimer composed of HisG and HisZ subunits.

It is found in the cytoplasm. The protein operates within amino-acid biosynthesis; L-histidine biosynthesis; L-histidine from 5-phospho-alpha-D-ribose 1-diphosphate: step 1/9. Functionally, required for the first step of histidine biosynthesis. May allow the feedback regulation of ATP phosphoribosyltransferase activity by histidine. In Burkholderia vietnamiensis (strain G4 / LMG 22486) (Burkholderia cepacia (strain R1808)), this protein is ATP phosphoribosyltransferase regulatory subunit.